We begin with the raw amino-acid sequence, 549 residues long: Undecaprenyl phosphate-alpha-4-amino-4-deoxy-L-arabinose arabinosyl transferase (549 aa).

The next 12 membrane-spanning stretches (helical) occupy residues 9-29, 80-100, 112-132, 133-153, 176-196, 204-224, 256-276, 288-308, 312-332, 346-366, 376-396, and 402-422; these read LLLIAFGLFYLVPLSNHGLWI, LFGVRIASVVATALSVLLAYL, SLACALLYASFGLIAGQSGYA, NLDPQFTFWVNLSLVALWHAL, FLTKGFLAWLLPVLVALPYML, LLGYGALAVLAALLVCLPWAL, PWWFYLPLLAVSCLPWSGLLP, QAPVVFLALWLLLPLAFFSLS, LPTYIMPCLLPLALLMGHALV, NGLLNLGLALLALAALAYLQL, FELFLVLLVIGAWAAAGLAQW, and AWAAPLLASWVLIALLPAAMP.

It belongs to the glycosyltransferase 83 family.

The protein localises to the cell inner membrane. It catalyses the reaction 4-amino-4-deoxy-alpha-L-arabinopyranosyl di-trans,octa-cis-undecaprenyl phosphate + lipid IVA = lipid IIA + di-trans,octa-cis-undecaprenyl phosphate.. The protein operates within lipopolysaccharide metabolism; 4-amino-4-deoxy-beta-L-arabinose-lipid A biosynthesis. Its function is as follows. Catalyzes the transfer of the L-Ara4N moiety of the glycolipid undecaprenyl phosphate-alpha-L-Ara4N to lipid A. The modified arabinose is attached to lipid A and is required for resistance to polymyxin and cationic antimicrobial peptides. The sequence is that of Undecaprenyl phosphate-alpha-4-amino-4-deoxy-L-arabinose arabinosyl transferase from Pseudomonas aeruginosa (strain LESB58).